The primary structure comprises 234 residues: Ubiquinone biosynthesis O-methyltransferase (234 aa).

4 residues coordinate S-adenosyl-L-methionine: R40, G59, D80, and M123.

The protein belongs to the methyltransferase superfamily. UbiG/COQ3 family.

It catalyses the reaction a 3-demethylubiquinol + S-adenosyl-L-methionine = a ubiquinol + S-adenosyl-L-homocysteine + H(+). The catalysed reaction is a 3-(all-trans-polyprenyl)benzene-1,2-diol + S-adenosyl-L-methionine = a 2-methoxy-6-(all-trans-polyprenyl)phenol + S-adenosyl-L-homocysteine + H(+). It functions in the pathway cofactor biosynthesis; ubiquinone biosynthesis. O-methyltransferase that catalyzes the 2 O-methylation steps in the ubiquinone biosynthetic pathway. This chain is Ubiquinone biosynthesis O-methyltransferase, found in Coxiella burnetii (strain CbuK_Q154) (Coxiella burnetii (strain Q154)).